Here is a 240-residue protein sequence, read N- to C-terminus: MSAKPIYKRVLLKASGEALMGSQGFGIDVAVADRIASDIAEARAMGVEVGVVVGGGNIFRGVAVASKGGDRVTGDHMGMLATVINALALATSLRKLDIDTVVLSAIAMPEICESFSQRATLYHLSLGRVVIFAGGTGNPFFTTDSAAALRAAEMGAEAIFKGTQVDGIYSADPKKDPSATRFDRLTHSEILEKGLAVMDVAAVALARENAIPIVVFSIHEKGGFTEILTGGGRATIVTDN.

13–16 (KASG) is an ATP binding site. An involved in allosteric activation by GTP region spans residues 21–26 (GSQGFG). A UMP-binding site is contributed by G55. Positions 56 and 60 each coordinate ATP. UMP contacts are provided by residues D75 and 136 to 143 (TGNPFFTT). ATP-binding residues include T163, Q164, Y169, and D172.

This sequence belongs to the UMP kinase family. In terms of assembly, homohexamer.

It localises to the cytoplasm. The enzyme catalyses UMP + ATP = UDP + ADP. It participates in pyrimidine metabolism; CTP biosynthesis via de novo pathway; UDP from UMP (UMPK route): step 1/1. Allosterically activated by GTP. Inhibited by UTP. Catalyzes the reversible phosphorylation of UMP to UDP. This Rhizobium meliloti (strain 1021) (Ensifer meliloti) protein is Uridylate kinase.